A 255-amino-acid polypeptide reads, in one-letter code: 4-diphosphocytidyl-2-C-methyl-D-erythritol kinase (255 aa).

The active site involves Lys6. Position 95–105 (95–105 (PVCAGLGGGSS)) interacts with ATP. Asp137 is an active-site residue.

It belongs to the GHMP kinase family. IspE subfamily.

The enzyme catalyses 4-CDP-2-C-methyl-D-erythritol + ATP = 4-CDP-2-C-methyl-D-erythritol 2-phosphate + ADP + H(+). Its pathway is isoprenoid biosynthesis; isopentenyl diphosphate biosynthesis via DXP pathway; isopentenyl diphosphate from 1-deoxy-D-xylulose 5-phosphate: step 3/6. In terms of biological role, catalyzes the phosphorylation of the position 2 hydroxy group of 4-diphosphocytidyl-2C-methyl-D-erythritol. In Campylobacter jejuni subsp. jejuni serotype O:2 (strain ATCC 700819 / NCTC 11168), this protein is 4-diphosphocytidyl-2-C-methyl-D-erythritol kinase.